A 130-amino-acid polypeptide reads, in one-letter code: Cystatin (130 aa).

A signal peptide spans 1–19; sequence MEWKIVVPLLAVAFTVANA. The Secondary area of contact signature appears at 67-71; the sequence is QVVSG. Intrachain disulfides connect Cys85/Cys94 and Cys108/Cys128.

The protein belongs to the cystatin family. As to expression, ubiquitous expression including brain, white muscle, heart, gill, kidney, spleen, liver and skin with the highest and lowest level in brain and gill, respectively.

The protein resides in the secreted. Its function is as follows. Cysteine proteinase inhibitor. The polypeptide is Cystatin (Oncorhynchus keta (Chum salmon)).